The following is a 213-amino-acid chain: MDDDDDDIPQLSSHTLAALQEFYLEQQQREGMKTSQGFNQYSVGSIEEDWQLSQFWYSDETASCLANEAIVAAGKGGRIACVSAPSVYQKLREQGGADFSVCILEYDRRFSVYGEEFIFYDYNNPLNLPEHLLPHSFDIVVADPPYLSEECLQKTAETIKYLTKGKILLCTGAIMEEQAAKHLGVKICKFIPKHSRNLANEFRCYVNYASGLD.

It belongs to the class I-like SAM-binding methyltransferase superfamily. EFM5 family.

It localises to the cytoplasm. The catalysed reaction is L-lysyl-[protein] + 3 S-adenosyl-L-methionine = N(6),N(6),N(6)-trimethyl-L-lysyl-[protein] + 3 S-adenosyl-L-homocysteine + 3 H(+). In terms of biological role, protein-lysine methyltransferase that selectively catalyzes the trimethylation of EEF1A at 'Lys-79'. The sequence is that of EEF1A lysine methyltransferase 1 from Gallus gallus (Chicken).